The following is a 173-amino-acid chain: Photosystem I assembly protein Ycf3 (173 aa).

TPR repeat units lie at residues Ala-35 to Pro-68, Ser-72 to Leu-105, and Gly-120 to Asn-153.

It belongs to the Ycf3 family.

The protein localises to the plastid. It localises to the chloroplast thylakoid membrane. Essential for the assembly of the photosystem I (PSI) complex. May act as a chaperone-like factor to guide the assembly of the PSI subunits. The polypeptide is Photosystem I assembly protein Ycf3 (Cyanidium caldarium (Red alga)).